A 60-amino-acid chain; its full sequence is Prophage outer membrane lipoprotein RzoD (60 aa).

The first 19 residues, 1–19 (MRKLKMMLCVMMLPLVVVG), serve as a signal peptide directing secretion. Cysteine 20 carries N-palmitoyl cysteine lipidation. A lipid anchor (S-diacylglycerol cysteine) is attached at cysteine 20.

The protein belongs to the lambdalikevirus o-spanin family. In terms of assembly, homodimer; disulfide-linked. Interacts (via C-terminus) with RZ (via C-terminus). Part of the spanin complex which spans the entire periplasmic space. The spanin complex is composed of spanin, inner membrane subunit and spanin, outer membrane subunit.

It is found in the cell outer membrane. Functionally, component of the spanin complex that disrupts the outer membrane and causes cell lysis during virus exit. The spanin complex conducts the final step in cell lysis by disrupting the outer membrane after holin and endolysin action have permeabilized the inner membrane and degraded the host peptidoglycans. In Escherichia coli (strain K12), this protein is Prophage outer membrane lipoprotein RzoD (rzoD).